A 290-amino-acid chain; its full sequence is MLRKHPIISITGSSGAGTTSVKRTFEQIFRRENVVAAYIEGDAFHRYNRAEMRTRMAEESDKGNKHFSHFSPETNLFAELEGVFRSYGETGTGNTRYYVHDDAESALHGVPPGTFTDWQPLPDASDLLFYEGLHGAVVTDKVNVAQYADLKIGVVPVINLEWIQKLHRDRNARGYSTEAVTDTILRRMPDYVNYICPQFAETDINFQRVPTVDTSNPFISRWIPTPDESMVVIRLKNPRGIDFPYLLSMIPSSFMSRANSIVIHGSKLDLAMQLILTPLILQLIERKKRA.

Residue 12-20 (GSSGAGTTS) participates in ATP binding.

Belongs to the phosphoribulokinase family.

The enzyme catalyses D-ribulose 5-phosphate + ATP = D-ribulose 1,5-bisphosphate + ADP + H(+). The protein operates within carbohydrate biosynthesis; Calvin cycle. The polypeptide is Phosphoribulokinase (cbbP) (Nitrobacter vulgaris).